A 131-amino-acid chain; its full sequence is Arsenate reductase (131 aa).

Active-site nucleophile residues include Cys10, Cys82, and Cys89. 2 cysteine pairs are disulfide-bonded: Cys10-Cys82 and Cys82-Cys89.

The protein belongs to the low molecular weight phosphotyrosine protein phosphatase family. Thioredoxin-coupled ArsC subfamily.

Its subcellular location is the cytoplasm. The enzyme catalyses arsenate + [thioredoxin]-dithiol + H(+) = arsenite + [thioredoxin]-disulfide + H2O. Functionally, catalyzes the reduction of arsenate [As(V)] to arsenite [As(III)]. This is Arsenate reductase from Staphylococcus aureus (strain bovine RF122 / ET3-1).